The following is a 344-amino-acid chain: MGGLMKKNTLILGIESSCDETAASVVKNGCEIVSSVVASQIESHKRFGGVVPEIASRHHVEQITLVIEEALKQANVTMDDLDGVAVTEGPGLVGALLIGVNAAKTLAFMHNLPLVGVHHIAGHIYANRFETEFQFPLLSLVVSGGHTELVLMKADNEFEIIGETRDDAAGEAYDKVARTLGLAYPGGVQIDKLAKDGEDTFHFPRAMMDDGSFDFSFSGLKSSFINTLHNLRQRGEEPNPNDMAASFQASVVDVLVSKTIRAAKQHGVKQLLLAGGVAANQGLRERLIQEVKLELPDTELIIPPLSLCGDNAAMIAAAGTVSFLQGKRSNYDMNANPGLLLEDI.

Fe cation contacts are provided by histidine 119 and histidine 123. Substrate-binding positions include 141-145 (VVSGG), aspartate 174, glycine 187, aspartate 191, and asparagine 280. Aspartate 310 contributes to the Fe cation binding site.

It belongs to the KAE1 / TsaD family. Fe(2+) is required as a cofactor.

The protein localises to the cytoplasm. It catalyses the reaction L-threonylcarbamoyladenylate + adenosine(37) in tRNA = N(6)-L-threonylcarbamoyladenosine(37) in tRNA + AMP + H(+). Its function is as follows. Required for the formation of a threonylcarbamoyl group on adenosine at position 37 (t(6)A37) in tRNAs that read codons beginning with adenine. Is involved in the transfer of the threonylcarbamoyl moiety of threonylcarbamoyl-AMP (TC-AMP) to the N6 group of A37, together with TsaE and TsaB. TsaD likely plays a direct catalytic role in this reaction. This Listeria innocua serovar 6a (strain ATCC BAA-680 / CLIP 11262) protein is tRNA N6-adenosine threonylcarbamoyltransferase.